A 302-amino-acid polypeptide reads, in one-letter code: Calpain-1 catalytic subunit (302 aa).

A domain III region spans residues Arg-1–Asp-114. The segment at Gln-115–Glu-130 is linker. Residues Ile-131 to Phe-301 are domain IV. EF-hand domains lie at Phe-173–Arg-206, Asn-203–Lys-238, and Val-268–Ala-302. 10 residues coordinate Ca(2+): Asp-186, Asp-188, Asn-190, Lys-192, Glu-197, Asp-216, Asp-218, Ser-220, Ser-222, and Glu-227.

Belongs to the peptidase C2 family. In terms of assembly, forms a heterodimer with a small (regulatory) subunit CAPNS1. Requires Ca(2+) as cofactor. In terms of processing, the N-terminus is blocked. Undergoes calcium-induced successive autoproteolytic cleavages that generate a membrane-bound 78 kDa active form and an intracellular 75 kDa active form. Calpastatin reduces with high efficiency the transition from 78 kDa to 75 kDa calpain forms. Ubiquitous.

It is found in the cytoplasm. The protein resides in the cell membrane. It carries out the reaction Broad endopeptidase specificity.. Activated by micromolar concentrations of calcium and inhibited by calpastatin. In terms of biological role, calcium-regulated non-lysosomal thiol-protease which catalyzes limited proteolysis of substrates involved in cytoskeletal remodeling and signal transduction. Proteolytically cleaves CTBP1. Cleaves and activates caspase-7 (CASP7). This is Calpain-1 catalytic subunit from Oryctolagus cuniculus (Rabbit).